The sequence spans 219 residues: AA11 family lytic polysaccharide monooxygenase A (219 aa).

The first 18 residues, 1–18 (MMLSKVVMGLLTASLAAA), serve as a signal peptide directing secretion. A Cu(+)-binding site is contributed by His-19. Cystine bridges form between Cys-58–Cys-154, Cys-94–Cys-116, and Cys-185–Cys-218. Asn-80 is a glycosylation site (N-linked (GlcNAc...) asparagine). Cu(+) is bound at residue His-89.

It belongs to the polysaccharide monooxygenase AA11 family. The cofactor is Cu(2+).

In terms of biological role, lytic polysaccharide monooxygenase (LPMO) that depolymerizes chitin via the oxidation of scissile beta-(1-4)-glycosidic bonds, yielding C1 or C4 oxidation products. Catalysis by LPMOs requires the reduction of the active-site copper from Cu(II) to Cu(I) by a reducing agent and H(2)O(2) or O(2) as a cosubstrate. Has considerable affinity for alpha-chitin and, more so, beta-chitin. Active toward both alpha-chitin and beta-chitin allomorphs and enhances chitin degradation by an endoacting chitinase, in particular for alpha-chitin, and so plays a role in fungal chitin turnover. The catalytic activity increases when supplying reactions with hydrogen peroxide, confirming that it has peroxygenase activity. Does not show activity on phosphoric acid-swollen cellulose (PASC), Avicel, tamarind xyloglucan, birchwood xylan, beechwood xylan, acetyl glucuronoxylan from aspen, ivory nut mannan, acetylated konjac glucomannan, potato starch, heparin, hyaluronic acid, and chitosan. The protein is AA11 family lytic polysaccharide monooxygenase A of Aspergillus fumigatus (strain CBS 144.89 / FGSC A1163 / CEA10) (Neosartorya fumigata).